Consider the following 464-residue polypeptide: Transcription factor SOX-8 (464 aa).

Disordered stretches follow at residues 1 to 55, 154 to 244, 292 to 315, and 354 to 374; these read MLDM…DTAE, RLRV…QELR, GHSA…ASYS, and QLSP…ADYG. Residues 40–51 are compositionally biased toward gly residues; the sequence is EGLGRAGGGGRG. A dimerization (DIM) region spans residues 55 to 97; it reads EAADERFPACIRDAVSQVLKGYDWSLVPMPVRGGGGGTLKAKP. A DNA-binding region (HMG box) is located at residues 99-167; sequence VKRPMNAFMV…QHKKDHPDYK (69 aa). Basic and acidic residues-rich tracts occupy residues 154–168 and 206–215; these read RLRV…DYKY and EAHHHSDHHT. Residues 221 to 299 form a transactivation domain (TAM) region; the sequence is PPTPPTTPKT…LNGHSALPTE (79 aa). Residues 303 to 315 show a composition bias toward low complexity; sequence ATASGSYGGASYS. The transactivation domain (TAC) stretch occupies residues 347-464; that stretch reads RPQIKTEQLS…QPVYTTLTRP (118 aa). Residues 354–366 are compositionally biased toward polar residues; that stretch reads QLSPSHYNDQSHG. The 9aaTAD motif lies at 418–426; it reads PSLYQYPYF. The interval 444 to 464 is disordered; sequence PPAHSPSSNWDQPVYTTLTRP. The segment covering 448–464 has biased composition (polar residues); that stretch reads SPSSNWDQPVYTTLTRP.

As to expression, brain, gut, limb, and testes. Slightly in liver, ovaries, spinal cord, lung and heart.

The protein resides in the nucleus. Functionally, transcription factor that may play a role in central nervous system, limb and facial development. May be involved in male sex determination. Binds the consensus motif 5'-[AT][AT]CAA[AT]G-3'. This Mus musculus (Mouse) protein is Transcription factor SOX-8.